Here is a 129-residue protein sequence, read N- to C-terminus: Small ribosomal subunit protein uS11 (129 aa).

This sequence belongs to the universal ribosomal protein uS11 family. As to quaternary structure, part of the 30S ribosomal subunit. Interacts with proteins S7 and S18. Binds to IF-3.

Located on the platform of the 30S subunit, it bridges several disparate RNA helices of the 16S rRNA. Forms part of the Shine-Dalgarno cleft in the 70S ribosome. The chain is Small ribosomal subunit protein uS11 from Bacillus cereus (strain G9842).